Reading from the N-terminus, the 179-residue chain is ATP synthase subunit b (179 aa).

The chain crosses the membrane as a helical span at residues isoleucine 23–proline 43.

The protein belongs to the ATPase B chain family. As to quaternary structure, F-type ATPases have 2 components, F(1) - the catalytic core - and F(0) - the membrane proton channel. F(1) has five subunits: alpha(3), beta(3), gamma(1), delta(1), epsilon(1). F(0) has three main subunits: a(1), b(2) and c(10-14). The alpha and beta chains form an alternating ring which encloses part of the gamma chain. F(1) is attached to F(0) by a central stalk formed by the gamma and epsilon chains, while a peripheral stalk is formed by the delta and b chains.

The protein localises to the cell inner membrane. Functionally, f(1)F(0) ATP synthase produces ATP from ADP in the presence of a proton or sodium gradient. F-type ATPases consist of two structural domains, F(1) containing the extramembraneous catalytic core and F(0) containing the membrane proton channel, linked together by a central stalk and a peripheral stalk. During catalysis, ATP synthesis in the catalytic domain of F(1) is coupled via a rotary mechanism of the central stalk subunits to proton translocation. Its function is as follows. Component of the F(0) channel, it forms part of the peripheral stalk, linking F(1) to F(0). The chain is ATP synthase subunit b from Pelagibacter ubique (strain HTCC1062).